The primary structure comprises 77 residues: Sec-independent protein translocase protein TatA (77 aa).

A helical transmembrane segment spans residues 2–22 (GFGGISIWQLLIILLIVVMLF). Basic and acidic residues-rich tracts occupy residues 46–59 (DNGE…EEPK) and 66–77 (QARKVEEPAKKD). Residues 46 to 77 (DNGEAEKPAVEEPKGQTIDAQARKVEEPAKKD) are disordered.

The protein belongs to the TatA/E family. The Tat system comprises two distinct complexes: a TatABC complex, containing multiple copies of TatA, TatB and TatC subunits, and a separate TatA complex, containing only TatA subunits. Substrates initially bind to the TatABC complex, which probably triggers association of the separate TatA complex to form the active translocon.

The protein resides in the cell inner membrane. Part of the twin-arginine translocation (Tat) system that transports large folded proteins containing a characteristic twin-arginine motif in their signal peptide across membranes. TatA could form the protein-conducting channel of the Tat system. This chain is Sec-independent protein translocase protein TatA, found in Ectopseudomonas mendocina (strain ymp) (Pseudomonas mendocina).